A 1349-amino-acid polypeptide reads, in one-letter code: Indole-3-acetaldehyde oxidase (1349 aa).

The 2Fe-2S ferredoxin-type domain occupies 7-94; it reads AAVVLAVNGK…RCSVTTSEGI (88 aa). 3 residues coordinate [2Fe-2S] cluster: Cys-46, Cys-51, and Cys-54. The 179-residue stretch at 237–415 folds into the FAD-binding PCMH-type domain; it reads VPVSDDGWYR…LSIFIPEWGS (179 aa).

This sequence belongs to the xanthine dehydrogenase family. In terms of assembly, aldehyde oxidases (AO) are homodimers and heterodimers of AO subunits. Requires [2Fe-2S] cluster as cofactor. FAD is required as a cofactor. Mo-molybdopterin serves as cofactor. Mostly expressed in coleoptiles, and, to a lower extent, in mesocotyl and roots.

The protein localises to the cytoplasm. The catalysed reaction is indole-3-acetaldehyde + O2 + H2O = (indol-3-yl)acetate + H2O2 + H(+). Its function is as follows. In higher plants aldehyde oxidases (AO) appear to be homo- and heterodimeric assemblies of AO subunits with probably different physiological functions. Involved in the biosynthesis of auxin. The polypeptide is Indole-3-acetaldehyde oxidase (AO2) (Zea mays (Maize)).